The primary structure comprises 360 residues: DNA replication and repair protein RecF (360 aa).

30–37 (GQNGSGKT) provides a ligand contact to ATP.

The protein belongs to the RecF family.

It is found in the cytoplasm. The RecF protein is involved in DNA metabolism; it is required for DNA replication and normal SOS inducibility. RecF binds preferentially to single-stranded, linear DNA. It also seems to bind ATP. This chain is DNA replication and repair protein RecF, found in Shewanella baltica (strain OS185).